The chain runs to 282 residues: Ribonuclease P protein subunit p38 (282 aa).

Disordered stretches follow at residues 1–21 and 61–103; these read MAAA…PLPV and EDRK…QASG. Alanine 2 is subject to N-acetylalanine. A Phosphoserine modification is found at serine 12. Residues 88 to 97 are compositionally biased toward basic and acidic residues; sequence EDLKKEKPKG. A phosphoserine mark is found at serine 226 and serine 235. The disordered stretch occupies residues 262–282; sequence KLIPNPNKIRKPPKSKRTASK. The span at 269–282 shows a compositional bias: basic residues; that stretch reads KIRKPPKSKRTASK.

Belongs to the eukaryotic ribosomal protein eL8 family. In terms of assembly, component of nuclear RNase P and RNase MRP ribonucleoproteins. RNase P consists of a catalytic RNA moiety and about 10 protein subunits; POP1, POP4, POP5, POP7, RPP14, RPP21, RPP25, RPP30, RPP38 and RPP40. Within the RNase P complex, POP1, POP7 and RPP25 form the 'finger' subcomplex, POP5, RPP14, RPP40 and homodimeric RPP30 form the 'palm' subcomplex, and RPP21, POP4 and RPP38 form the 'wrist' subcomplex. All subunits of the RNase P complex interact with the catalytic RNA. Several subunits of RNase P are also part of the RNase MRP complex. RNase MRP consists of a catalytic RNA moiety and about 8 protein subunits; POP1, POP7, RPP25, RPP30, RPP38, RPP40 and possibly also POP4 and POP5.

It localises to the nucleus. It is found in the nucleolus. In terms of biological role, component of ribonuclease P, a ribonucleoprotein complex that generates mature tRNA molecules by cleaving their 5'-ends. Also a component of the MRP ribonuclease complex, which cleaves pre-rRNA sequences. The sequence is that of Ribonuclease P protein subunit p38 (RPP38) from Bos taurus (Bovine).